The primary structure comprises 214 residues: ATP-dependent Clp protease proteolytic subunit (214 aa).

S110 serves as the catalytic Nucleophile. Residue H135 is part of the active site.

Belongs to the peptidase S14 family. In terms of assembly, fourteen ClpP subunits assemble into 2 heptameric rings which stack back to back to give a disk-like structure with a central cavity, resembling the structure of eukaryotic proteasomes.

The protein resides in the cytoplasm. The enzyme catalyses Hydrolysis of proteins to small peptides in the presence of ATP and magnesium. alpha-casein is the usual test substrate. In the absence of ATP, only oligopeptides shorter than five residues are hydrolyzed (such as succinyl-Leu-Tyr-|-NHMec, and Leu-Tyr-Leu-|-Tyr-Trp, in which cleavage of the -Tyr-|-Leu- and -Tyr-|-Trp bonds also occurs).. Cleaves peptides in various proteins in a process that requires ATP hydrolysis. Has a chymotrypsin-like activity. Plays a major role in the degradation of misfolded proteins. This chain is ATP-dependent Clp protease proteolytic subunit, found in Legionella pneumophila (strain Corby).